A 424-amino-acid polypeptide reads, in one-letter code: Serine--tRNA ligase (424 aa).

231 to 233 (TAE) is a binding site for L-serine. 262 to 264 (RSE) is a binding site for ATP. Glu285 is a binding site for L-serine. 349–352 (EISS) is an ATP binding site. Ser385 contributes to the L-serine binding site.

The protein belongs to the class-II aminoacyl-tRNA synthetase family. Type-1 seryl-tRNA synthetase subfamily. In terms of assembly, homodimer. The tRNA molecule binds across the dimer.

Its subcellular location is the cytoplasm. The enzyme catalyses tRNA(Ser) + L-serine + ATP = L-seryl-tRNA(Ser) + AMP + diphosphate + H(+). It carries out the reaction tRNA(Sec) + L-serine + ATP = L-seryl-tRNA(Sec) + AMP + diphosphate + H(+). It functions in the pathway aminoacyl-tRNA biosynthesis; selenocysteinyl-tRNA(Sec) biosynthesis; L-seryl-tRNA(Sec) from L-serine and tRNA(Sec): step 1/1. Its function is as follows. Catalyzes the attachment of serine to tRNA(Ser). Is also able to aminoacylate tRNA(Sec) with serine, to form the misacylated tRNA L-seryl-tRNA(Sec), which will be further converted into selenocysteinyl-tRNA(Sec). This Bacillus anthracis (strain A0248) protein is Serine--tRNA ligase.